The sequence spans 526 residues: Alpha-1,3-mannosyl-glycoprotein 4-beta-N-acetylglucosaminyltransferase A (526 aa).

Topologically, residues 1–6 are cytoplasmic; it reads MRLRNG. The helical; Signal-anchor for type II membrane protein transmembrane segment at 7-27 threads the bilayer; that stretch reads TVATALVFVTSFLTLSWYTTW. The stretch at 28–63 forms a coiled coil; sequence QNGKEKLIAYQREFLALKERLRVAEHRISQRSSELN. Residues 28 to 526 lie on the Lumenal side of the membrane; the sequence is QNGKEKLIAY…NEIHIKKVTS (499 aa). N449 carries N-linked (GlcNAc...) asparagine glycosylation. The residue at position 465 (S465) is a Phosphoserine.

This sequence belongs to the glycosyltransferase 54 family. Requires a divalent metal cation as cofactor. In terms of processing, N-glycosylated.

It localises to the golgi apparatus membrane. The protein resides in the secreted. The enzyme catalyses N(4)-{beta-D-GlcNAc-(1-&gt;2)-alpha-D-Man-(1-&gt;3)-[beta-D-GlcNAc-(1-&gt;2)-alpha-D-Man-(1-&gt;6)]-beta-D-Man-(1-&gt;4)-beta-D-GlcNAc-(1-&gt;4)-beta-D-GlcNAc}-L-asparaginyl-[protein] + UDP-N-acetyl-alpha-D-glucosamine = N(4)-{beta-D-GlcNAc-(1-&gt;2)-[beta-D-GlcNAc-(1-&gt;4)]-alpha-D-Man-(1-&gt;3)-[beta-D-GlcNAc-(1-&gt;2)-alpha-D-Man-(1-&gt;6)]-beta-D-Man-(1-&gt;4)-beta-D-GlcNAc-(1-&gt;4)-beta-D-GlcNAc}-L-asparaginyl-[protein] + UDP + H(+). The catalysed reaction is an N(4)-{beta-D-GlcNAc-(1-&gt;2)-alpha-D-Man-(1-&gt;3)-[alpha-D-Man-(1-&gt;6)]-beta-D-Man-(1-&gt;4)-beta-D-GlcNAc-(1-&gt;4)-beta-D-GlcNAc}-L-asparaginyl-[protein] + UDP-N-acetyl-alpha-D-glucosamine = an N(4)-{beta-D-GlcNAc-(1-&gt;2)-[beta-D-GlcNAc-(1-&gt;4)]-alpha-D-Man-(1-&gt;3)-[alpha-D-Man-(1-&gt;6)]-beta-D-Man-(1-&gt;4)-beta-D-GlcNAc-(1-&gt;4)-beta-D-GlcNAc}-L-asparaginyl-[protein] + UDP + H(+). It catalyses the reaction an N(4)-{beta-D-GlcNAc-(1-&gt;2)-alpha-D-Man-(1-&gt;3)-[beta-D-GlcNAc-(1-&gt;2)-[beta-D-GlcNAc-(1-&gt;6)]-alpha-D-Man-(1-&gt;6)]-beta-D-Man-(1-&gt;4)-beta-D-GlcNAc-(1-&gt;4)-beta-D-GlcNAc}-L-asparaginyl-[protein] + UDP-N-acetyl-alpha-D-glucosamine = an N(4)-{beta-D-GlcNAc-(1-&gt;2)-[beta-D-GlcNAc-(1-&gt;4)]-alpha-D-Man-(1-&gt;3)-[beta-D-GlcNAc-(1-&gt;2)-[beta-D-GlcNAc-(1-&gt;6)]-alpha-D-Man-(1-&gt;6)]-beta-D-Man-(1-&gt;4)-beta-D-GlcNAc-(1-&gt;4)-beta-D-GlcNAc}-L-asparaginyl-[protein] + UDP + H(+). It carries out the reaction an N(4)-{beta-D-GlcNAc-(1-&gt;2)-alpha-D-Man-(1-&gt;3)-[beta-D-GlcNAc-(1-&gt;2)-alpha-D-Man-(1-&gt;6)]-beta-D-Man-(1-&gt;4)-beta-D-GlcNAc-(1-&gt;4)-[alpha-L-Fuc-(1-&gt;6)]-beta-D-GlcNAc}-L-asparaginyl-[protein] + UDP-N-acetyl-alpha-D-glucosamine = N(4)-{beta-D-GlcNAc-(1-&gt;2)-[beta-D-GlcNAc-(1-&gt;4)]-alpha-D-Man-(1-&gt;3)-[beta-D-GlcNAc-(1-&gt;2)-alpha-D-Man-(1-&gt;6)]-beta-D-Man-(1-&gt;4)-beta-D-GlcNAc-(1-&gt;4)-[alpha-L-Fuc-(1-&gt;6)]-beta-D-GlcNAc}-asparaginyl-[protein] + UDP + H(+). The enzyme catalyses an N(4)-{beta-D-GlcNAc-(1-&gt;2)-alpha-D-Man-(1-&gt;3)-[beta-D-Gal-(1-&gt;4)-beta-D-GlcNAc-(1-&gt;2)-alpha-D-Man-(1-&gt;6)]-beta-D-Man-(1-&gt;4)-beta-D-GlcNAc-(1-&gt;4)-beta-D-GlcNAc}-L-asparaginyl-[protein] + UDP-N-acetyl-alpha-D-glucosamine = an N(4)-{beta-D-GlcNAc-(1-&gt;2)-[beta-D-GlcNAc-(1-&gt;4)]-alpha-D-Man-(1-&gt;3)-[beta-D-Gal-(1-&gt;4)-beta-D-GlcNAc-(1-&gt;2)-alpha-D-Man-(1-&gt;6)]-beta-D-Man-(1-&gt;4)-beta-D-GlcNAc-(1-&gt;4)-beta-D-GlcNAc}-L-asparaginyl-[protein] + UDP + H(+). The catalysed reaction is N(4)-{beta-D-GlcNAc-(1-&gt;2)-alpha-D-Man-(1-&gt;3)-[alpha-D-Man-(1-&gt;3)-{alpha-D-Man-(1-&gt;6)}-alpha-D-Man-(1-&gt;6)]-beta-D-Man-(1-&gt;4)-beta-D-GlcNAc-(1-&gt;4)-beta-D-GlcNAc}-asparaginyl-[protein] + UDP-N-acetyl-alpha-D-glucosamine = N(4)-{beta-D-GlcNAc-(1-&gt;2)-[beta-D-GlcNAc-(1-&gt;4)]-alpha-D-Man-(1-&gt;3)-[alpha-D-Man-(1-&gt;3)-{alpha-D-Man-(1-&gt;6)}-alpha-D-Man-(1-&gt;6)]-beta-D-Man-(1-&gt;4)-beta-D-GlcNAc-(1-&gt;4)-beta-D-GlcNAc}-asparaginyl-[protein] + UDP + H(+). It catalyses the reaction N(4)-{beta-D-GlcNAc-(1-&gt;2)-alpha-D-Man-(1-&gt;3)-beta-D-Man-(1-&gt;4)-beta-D-GlcNAc-(1-&gt;4)-beta-D-GlcNAc}-asparaginyl-[protein] + UDP-N-acetyl-alpha-D-glucosamine = N(4)-{beta-D-GlcNAc-(1-&gt;2)-[beta-D-GlcNAc-(1-&gt;4)]-alpha-D-Man-(1-&gt;3)-beta-D-Man-(1-&gt;4)-beta-D-GlcNAc-(1-&gt;4)-beta-D-GlcNAc}-asparaginyl-[protein] + UDP + H(+). It functions in the pathway protein modification; protein glycosylation. Its activity is regulated as follows. Inhibited by UDP. Glycosyltransferase that catalyze the transfer of GlcNAc from UDP-GlcNAc to the GlcNAcbeta1-2Manalpha1-3 arm of the core structure of N-linked glycans through a beta1-4 linkage and participates in the production of tri- and tetra-antennary N-linked sugar chains. Involved in glucose transport by mediating SLC2A2/GLUT2 glycosylation, thereby controlling cell-surface expression of SLC2A2 in pancreatic beta cells. This Rattus norvegicus (Rat) protein is Alpha-1,3-mannosyl-glycoprotein 4-beta-N-acetylglucosaminyltransferase A.